Consider the following 104-residue polypeptide: MQRLCAHALILVLALAAFCEASWKPHSQLQDAPVAPGANKGQEPLRMDRLGPASHPRRQLGLQDPPHMVADLSKKQGPWVEEEEAAYGWMDFGRRSAEEGDQHP.

An N-terminal signal peptide occupies residues methionine 1–alanine 21. A propeptide spanning residues serine 22–arginine 58 is cleaved from the precursor. Residues histidine 26 to alanine 70 form a disordered region. At tyrosine 87 the chain carries Sulfotyrosine. Residue phenylalanine 92 is modified to Phenylalanine amide. Position 96 is a phosphoserine (serine 96). A propeptide spanning residues serine 96 to proline 104 is cleaved from the precursor.

It belongs to the gastrin/cholecystokinin family. Post-translationally, sulfation enhances proteolytic processing, and blocks peptide degradation. Levels of sulfation differ between proteolytically-cleaved gastrins and between tissues.

The protein resides in the secreted. Gastrin stimulates the stomach mucosa to produce and secrete hydrochloric acid and the pancreas to secrete its digestive enzymes. It also stimulates smooth muscle contraction and increases blood circulation and water secretion in the stomach and intestine. In Ovis aries (Sheep), this protein is Gastrin (GAST).